Here is a 493-residue protein sequence, read N- to C-terminus: Lysostaphin (493 aa).

Residues 1 to 23 form the signal peptide; the sequence is MKKTKNNYYTRPLAIGLSTFALA. A propeptide spanning residues 24–247 is cleaved from the precursor; that stretch reads SIVYGGIQNE…ALVQNRTALR (224 aa). 14 tandem repeats follow at residues 49 to 61, 62 to 74, 75 to 87, 88 to 100, 101 to 113, 114 to 126, 127 to 139, 140 to 152, 153 to 165, 166 to 178, 179 to 191, 192 to 204, 205 to 217, and 218 to 230. Residues 49–243 form a 15 X 13 AA approximate tandem repeats of A-E-V-E-T-S-K-A-P-V-E-N-T region; sequence AEVETSKAPV…ETSKALVQNR (195 aa). Positions 52-232 are disordered; sequence ETSKAPVENT…SKAPVENTAE (181 aa). The stretch at 231 to 243 is one 15; approximate repeat; the sequence is AEVETSKALVQNR. Zn(2+) contacts are provided by His279 and Asp283. His360 is an active-site residue. Position 362 (His362) interacts with Zn(2+). The SH3b domain occupies 413–481; sequence SESASFTPNT…YLPVRTWNKS (69 aa).

Belongs to the peptidase M23B family. Monomer. Zn(2+) is required as a cofactor.

The protein localises to the secreted. The enzyme catalyses Hydrolysis of the -Gly-|-Gly- bond in the pentaglycine inter-peptide link joining staphylococcal cell wall peptidoglycans.. Its function is as follows. Lyses staphylococcal cells by hydrolyzing the polyglycine interpeptide bridges of the peptidoglycan. This chain is Lysostaphin (lss), found in Staphylococcus simulans.